The following is a 289-amino-acid chain: Acetyl-coenzyme A carboxylase carboxyl transferase subunit beta (289 aa).

The 266-residue stretch at 24–289 folds into the CoA carboxyltransferase N-terminal domain; that stretch reads LWTNCESCGQ…RQKTVSDAAA (266 aa). Residues C28, C31, C47, and C50 each coordinate Zn(2+). The C4-type zinc finger occupies 28 to 50; that stretch reads CESCGQMMLTKELERSEKVCPHC.

The protein belongs to the AccD/PCCB family. As to quaternary structure, acetyl-CoA carboxylase is a heterohexamer composed of biotin carboxyl carrier protein (AccB), biotin carboxylase (AccC) and two subunits each of ACCase subunit alpha (AccA) and ACCase subunit beta (AccD). Zn(2+) serves as cofactor.

The protein localises to the cytoplasm. It carries out the reaction N(6)-carboxybiotinyl-L-lysyl-[protein] + acetyl-CoA = N(6)-biotinyl-L-lysyl-[protein] + malonyl-CoA. It functions in the pathway lipid metabolism; malonyl-CoA biosynthesis; malonyl-CoA from acetyl-CoA: step 1/1. Its function is as follows. Component of the acetyl coenzyme A carboxylase (ACC) complex. Biotin carboxylase (BC) catalyzes the carboxylation of biotin on its carrier protein (BCCP) and then the CO(2) group is transferred by the transcarboxylase to acetyl-CoA to form malonyl-CoA. The polypeptide is Acetyl-coenzyme A carboxylase carboxyl transferase subunit beta (Gluconobacter oxydans (strain 621H) (Gluconobacter suboxydans)).